The sequence spans 661 residues: UvrABC system protein B (661 aa).

A Helicase ATP-binding domain is found at 25-182 (AGLNSKKRSQ…NDLINLQYKR (158 aa)). 38 to 45 (GITGSGKT) lines the ATP pocket. A Beta-hairpin motif is present at residues 91-114 (YYDYYQPEAYIARTDTFIEKDSSI). The Helicase C-terminal domain occupies 430–592 (QVEDLISEIQ…IIPKTINRAI (163 aa)). In terms of domain architecture, UVR spans 621–656 (KANINKLNKEMLKAASNLEFEQAAKLRDQLKTLEAA).

Belongs to the UvrB family. As to quaternary structure, forms a heterotetramer with UvrA during the search for lesions. Interacts with UvrC in an incision complex.

Its subcellular location is the cytoplasm. Functionally, the UvrABC repair system catalyzes the recognition and processing of DNA lesions. A damage recognition complex composed of 2 UvrA and 2 UvrB subunits scans DNA for abnormalities. Upon binding of the UvrA(2)B(2) complex to a putative damaged site, the DNA wraps around one UvrB monomer. DNA wrap is dependent on ATP binding by UvrB and probably causes local melting of the DNA helix, facilitating insertion of UvrB beta-hairpin between the DNA strands. Then UvrB probes one DNA strand for the presence of a lesion. If a lesion is found the UvrA subunits dissociate and the UvrB-DNA preincision complex is formed. This complex is subsequently bound by UvrC and the second UvrB is released. If no lesion is found, the DNA wraps around the other UvrB subunit that will check the other stand for damage. This chain is UvrABC system protein B, found in Rickettsia akari (strain Hartford).